Reading from the N-terminus, the 908-residue chain is Zinc finger and BTB domain-containing protein 41 (908 aa).

The disordered stretch occupies residues 38–59; the sequence is TQAPERPTPEAAQRCQELPPSP. Residues 89 to 153 enclose the BTB domain; that stretch reads CDLLIIVEGK…LYTSEFFVYK (65 aa). A C2H2-type 1 zinc finger spans residues 208–231; the sequence is HQCKFCSRHFCYKKSLENHLAKTH. A compositionally biased stretch (basic residues) spans 252–261; that stretch reads RRSKRNRKCP. The tract at residues 252 to 344 is disordered; the sequence is RRSKRNRKCP…EAGDSAGSIH (93 aa). Over residues 267 to 276 the composition is skewed to acidic residues; it reads TSDDEQESGD. A compositionally biased stretch (basic and acidic residues) spans 279–296; that stretch reads DNLHQESSEKERSDRNDS. The segment covering 297-336 has biased composition (acidic residues); that stretch reads EDPGSEYNAEDEELEEEVSDEDSDTEQSDKDNDAEEEPEA. 13 C2H2-type zinc fingers span residues 360-382, 388-410, 421-444, 462-484, 490-513, 517-540, 546-568, 574-596, 602-624, 630-653, 667-689, 695-717, and 723-746; these read LQCP…TRVH, FECD…RKKH, HKCP…KRFH, WKCD…MILH, FKCT…EKFH, FPCD…ECTH, WTCF…LRIH, HLCS…LRVH, YECD…KKIH, HQCE…KSVH, HQCD…FRTH, YKCQ…LVIH, and FNCQ…DHVH.

The protein resides in the nucleus. Its function is as follows. May be involved in transcriptional regulation. This chain is Zinc finger and BTB domain-containing protein 41 (Zbtb41), found in Mus musculus (Mouse).